Consider the following 425-residue polypeptide: TRAF family member-associated NF-kappa-B activator (425 aa).

N-acetylmethionine is present on methionine 1. A necessary for interaction with ZC3H12A region spans residues 1–31 (MDKNIGEQLNKAYEAFRQACMDRDSAVKELQ). The stretch at 22–62 (DRDSAVKELQQKTENYEQRIREQQEQLSLQQTIIDKLKSQL) forms a coiled coil. Residues 70–191 (DNNYGCVPLL…QCTDKTDKQE (122 aa)) form a necessary for interaction with TRAF6 region. Residues serine 126 and serine 129 each carry the phosphoserine modification. The tract at residues 133-172 (HERGNIEKTFWDLKEEFHKICMLAKAQKDHLSKLNIPDTA) is interaction with TBK1 and IKBKE. A TRAF family member interaction region spans residues 172–191 (ATETQCSVPIQCTDKTDKQE). Phosphoserine occurs at positions 178 and 208. Threonine 213 bears the Phosphothreonine mark. Phosphoserine is present on residues serine 225, serine 228, serine 341, serine 354, and serine 357. The UBZ1-type zinc finger occupies 393-420 (PRVCEFCQAVFPPSITSRGDFLRHLNSH). 4 residues coordinate Zn(2+): cysteine 396, cysteine 399, histidine 416, and histidine 420.

Homodimer. Found in a deubiquitination complex with TANK, USP10 and ZC3H12A; this complex inhibits genotoxic stress- or interleukin-1-beta-mediated NF-kappaB activation by promoting IKBKG or TRAF6 deubiquitination. Interacts with IKBKG; this interaction increases in response to DNA damage. Interacts with TRAF6; this interaction increases in response to DNA damage and recruits USP10 to the ubiquitinated TRAF6. Interacts with USP10; this interaction increases in response to DNA damage. Interacts with ZC3H12A; this interaction increases in response to DNA damage. Interacts with TBK1. Interacts with IKBKE. Also interacts with TRAF1, TRAF2, and TRAF3 by binding to their TRAF-C domains; the interaction with TRAF2 is disrupted by the phosphorylation of TANK by IKBKE. Interacts more strongly with TRAF1 and TRAF2 than TRAF3. Interacts with IKBKG; the interaction is enhanced by IKBKE and TBK1. Part of a ternary complex consisting of TANK, IKBKB and IKBKG. In terms of assembly, (Microbial infection) Interacts with vaccinia virus protein C6. As to quaternary structure, (Microbial infection) Interacts with Seneca Valley virus protease 3C; this interaction allows the cleavage of TANK and subsequent suppression of host innate immunity. In terms of processing, phosphorylated by IKBKE. Post-translationally, (Microbial infection) Cleaved by encephalomyocarditis virus (EMCV) protease 3C. This cleavage allows the virus to disrupt the TANK-TBK1-IKKepsilon-IRF3 complex, thereby inhibiting the induction of the IFN-beta signal pathway. (Microbial infection) Cleaved by Seneca Valley virus protease 3C allowing the virus to suppress interferon type-I through both RIG-I and Toll-like receptor-dependent pathways. In terms of tissue distribution, ubiquitous.

It is found in the cytoplasm. Functionally, adapter protein involved in I-kappa-B-kinase (IKK) regulation which constitutively binds TBK1 and IKBKE playing a role in antiviral innate immunity. Acts as a regulator of TRAF function by maintaining them in a latent state. Blocks TRAF2 binding to LMP1 and inhibits LMP1-mediated NF-kappa-B activation. Negatively regulates NF-kappaB signaling and cell survival upon DNA damage. Plays a role as an adapter to assemble ZC3H12A, USP10 in a deubiquitination complex which plays a negative feedback response to attenuate NF-kappaB activation through the deubiquitination of IKBKG or TRAF6 in response to interleukin-1-beta (IL1B) stimulation or upon DNA damage. Promotes UBP10-induced deubiquitination of TRAF6 in response to DNA damage. May control negatively TRAF2-mediated NF-kappa-B activation signaled by CD40, TNFR1 and TNFR2. The protein is TRAF family member-associated NF-kappa-B activator (TANK) of Homo sapiens (Human).